Here is a 308-residue protein sequence, read N- to C-terminus: Mitochondrial import receptor subunit TOM40B (308 aa).

Residues 1 to 29 are disordered; sequence MGNTLGLAPMGALPRRSPRREEPLPNPGS. A required for mitochondrial targeting region spans residues 281–308; it reads PLPVTLALGAFLNHWRNRFHCGFSITVG.

It belongs to the Tom40 family. In terms of assembly, forms part of the preprotein translocase of the outer mitochondrial membrane (TOM complex) containing TOMM22, TOMM40, TOMM40L and TOMM70. Interacts with mitochondrial targeting sequences.

The protein localises to the mitochondrion outer membrane. Its function is as follows. Potential channel-forming protein implicated in import of protein precursors into mitochondria. The chain is Mitochondrial import receptor subunit TOM40B from Bos taurus (Bovine).